A 250-amino-acid chain; its full sequence is Methionine aminopeptidase (250 aa).

A substrate-binding site is contributed by H77. A divalent metal cation contacts are provided by D95, D106, and H169. H176 contributes to the substrate binding site. 2 residues coordinate a divalent metal cation: E202 and E233.

The protein belongs to the peptidase M24A family. Methionine aminopeptidase type 1 subfamily. Monomer. It depends on Co(2+) as a cofactor. Zn(2+) is required as a cofactor. The cofactor is Mn(2+). Fe(2+) serves as cofactor.

It carries out the reaction Release of N-terminal amino acids, preferentially methionine, from peptides and arylamides.. Removes the N-terminal methionine from nascent proteins. The N-terminal methionine is often cleaved when the second residue in the primary sequence is small and uncharged (Met-Ala-, Cys, Gly, Pro, Ser, Thr, or Val). Requires deformylation of the N(alpha)-formylated initiator methionine before it can be hydrolyzed. This is Methionine aminopeptidase from Clostridium acetobutylicum (strain ATCC 824 / DSM 792 / JCM 1419 / IAM 19013 / LMG 5710 / NBRC 13948 / NRRL B-527 / VKM B-1787 / 2291 / W).